We begin with the raw amino-acid sequence, 359 residues long: PWWP domain-containing protein 1 (359 aa).

Residues 1 to 37 (MNNARTNAKRRRLSSKQGGLSISEGKESNIPSVVEES) are disordered. Residues 52-114 (FGDRILVKAP…RNSVKPLLDS (63 aa)) form the PWWP domain. Disordered stretches follow at residues 133-161 (AYEA…AAEE) and 204-255 (VAST…SPLN). The segment covering 204–224 (VASTSRSSTQLSDQRYPLSSN) has biased composition (polar residues). Ser-252 is modified (phosphoserine).

In terms of assembly, interacts with set9 and histone H4K20me1. Associates with nucleosomes.

The protein localises to the nucleus. Functionally, necessary for DNA damage checkpoint activation. Required for the association of set9 with chromatin and subsequent methylation of H4K20. Associates with H4K20me1 to increase the concentration of set9 on chromatin to perform H4K20me3. H4K20me3 is mainly enriched at heterochromatin and is required for proper heterochromatin assembly. The protein is PWWP domain-containing protein 1 (pdp1) of Schizosaccharomyces pombe (strain 972 / ATCC 24843) (Fission yeast).